The primary structure comprises 510 residues: ATP-dependent zinc metalloprotease FtsH 2 (510 aa).

The Cytoplasmic portion of the chain corresponds to 1–4 (MKKN). The chain crosses the membrane as a helical span at residues 5–25 (LHIIILALSIFINLLFIYIFI). The Extracellular portion of the chain corresponds to 26-31 (SEVKPN). A helical transmembrane segment spans residues 32–52 (LNLNLSFILTAAVIVVTYLLF). At 53-510 (KNKFSELMPV…LWEEENTLCV (458 aa)) the chain is on the cytoplasmic side. Residue 124 to 131 (GPPGTGKT) coordinates ATP. Residue His343 participates in Zn(2+) binding. The active site involves Glu344. The Zn(2+) site is built by His347 and Asp418.

It in the central section; belongs to the AAA ATPase family. The protein in the C-terminal section; belongs to the peptidase M41 family. In terms of assembly, homohexamer. The cofactor is Zn(2+).

Its subcellular location is the cell membrane. In terms of biological role, acts as a processive, ATP-dependent zinc metallopeptidase for both cytoplasmic and membrane proteins. Plays a role in the quality control of integral membrane proteins. The chain is ATP-dependent zinc metalloprotease FtsH 2 from Thermoanaerobacter sp. (strain X514).